Here is a 544-residue protein sequence, read N- to C-terminus: MASKGKKNKVRTNSDLSNQVLLQYESLQKEHEKIKKECKKLQEERDEALRKLNEFESVSHRVIEEVNSIQENLEIEKTCRESVEALASKLNRQNLSLKRKSMLYMSRLAADVVAEISIDDEDDEDAHEEEAGVCSSSHCHIVITELRDKLEEILATKKQLMIDLETTREQLSKTRQELLKEKHDNTVLIAETFQQKKLLGKYNRVSQYALDEFESLQEDLKLERDLRSEAEKFAHEMLIEQKKLKRQSQVLVQSISVGEALQKALAEISTLTHTLEKQRLEHQQQVKGLEEQVNSSEVKKQLTALQRQTDLLEEERKEWQHKHTKAETEAKDLRFTVEELKKKLQQVSNPPTAAPAPPPPPPPPPPPPPPSSSSSNPLSSLLSILRKKKDVSTEIALVEKDSSEKSPEKDVRQQAVDEMMLRIKKGVQLRPVSQTTNRVRPGPKEPTASNSAIQELQGILNTVKRPGPSSSPGPRPPSPSEKSELEKALQRRREAVKSAKNNTNPSSVVDLTQIKQTRSEPGQNTGDQETLRHTTTTICTEQLS.

3 coiled-coil regions span residues 17–100, 141–184, and 259–349; these read SNQV…LKRK, IVIT…EKHD, and EALQ…QVSN. The segment at 343–544 is disordered; it reads KLQQVSNPPT…TTTICTEQLS (202 aa). Residues 352–371 are compositionally biased toward pro residues; the sequence is TAAPAPPPPPPPPPPPPPPS. Residues 372 to 383 show a composition bias toward low complexity; it reads SSSSNPLSSLLS. The segment covering 397–412 has biased composition (basic and acidic residues); that stretch reads LVEKDSSEKSPEKDVR. The span at 469–479 shows a compositional bias: pro residues; it reads SSSPGPRPPSP. Positions 480–504 form a coiled coil; the sequence is SEKSELEKALQRRREAVKSAKNNTN. The segment covering 481 to 497 has biased composition (basic and acidic residues); that stretch reads EKSELEKALQRRREAVK. A compositionally biased stretch (polar residues) spans 499–544; that stretch reads AKNNTNPSSVVDLTQIKQTRSEPGQNTGDQETLRHTTTTICTEQLS.

The protein belongs to the shootin family.

It localises to the perikaryon. The protein localises to the cell projection. The protein resides in the axon. It is found in the growth cone. Its subcellular location is the cytoplasm. It localises to the cytoskeleton. The protein localises to the filopodium. The protein resides in the lamellipodium. In terms of biological role, involved in the generation of internal asymmetric signals required for neuronal polarization and neurite outgrowth. The chain is Shootin-1 from Danio rerio (Zebrafish).